A 420-amino-acid polypeptide reads, in one-letter code: CinA-like protein (420 aa).

Belongs to the CinA family.

The protein is CinA-like protein of Chlorobium phaeobacteroides (strain BS1).